The primary structure comprises 46 residues: Photosystem II reaction center protein Psb30 (46 aa).

M1 carries the N-formylmethionine modification. Residues 1–20 are Lumenal-facing; sequence MGIFNGIIEFLSNINFEVIA. The helical transmembrane segment at 21-38 threads the bilayer; it reads QLTMIAMIGIAGPMIIFL. Over 39 to 46 the chain is Cytoplasmic; that stretch reads LAVRRGNL.

Belongs to the Psb30/Ycf12 family. In terms of assembly, PSII is composed of 1 copy each of membrane proteins PsbA, PsbB, PsbC, PsbD, PsbE, PsbF, PsbH, PsbI, PsbJ, PsbK, PsbL, PsbM, PsbT, PsbX, PsbY, PsbZ, Psb30/Ycf12, peripheral proteins PsbO, CyanoQ (PsbQ), PsbU, PsbV and a large number of cofactors. It forms dimeric complexes. Part of a photosystem II (PSII) assembly intermediate complex PSII-I; crystallized from a strain deleted of psbJ, it forms monomeric PSII before addition of the oxygen evolving complex. PSII-I includes 3 assembly factors not found in mature PSII (Psb27, Psb28 and Psb34). PSII binds multiple chlorophylls, carotenoids and specific lipids. serves as cofactor.

The protein localises to the cellular thylakoid membrane. Functionally, a core subunit of photosystem II (PSII). PSII is a light-driven water plastoquinone oxidoreductase, using light energy to abstract electrons from H(2)O, generating a proton gradient subsequently used for ATP formation. Helps stabilize PSII. In Thermosynechococcus vestitus (strain NIES-2133 / IAM M-273 / BP-1), this protein is Photosystem II reaction center protein Psb30.